Consider the following 433-residue polypeptide: Adenosylhomocysteinase A (433 aa).

5 residues coordinate substrate: Thr57, Asp132, Glu157, Lys187, and Asp191. Residues 184–351 (SVTKSKFDNL…EGRLVNLGCA (168 aa)) are NAD binding.

Belongs to the adenosylhomocysteinase family. Homotetramer. The cofactor is NAD(+).

The protein localises to the cytoplasm. The catalysed reaction is S-adenosyl-L-homocysteine + H2O = L-homocysteine + adenosine. It participates in amino-acid biosynthesis; L-homocysteine biosynthesis; L-homocysteine from S-adenosyl-L-homocysteine: step 1/1. Catalyzes the hydrolysis of S-adenosyl-L-homocysteine to form adenosine and homocysteine. Binds copper ions. The polypeptide is Adenosylhomocysteinase A (ahcy-a) (Xenopus laevis (African clawed frog)).